Here is an 876-residue protein sequence, read N- to C-terminus: Valine--tRNA ligase (876 aa).

The short motif at 43–53 is the 'HIGH' region element; that stretch reads PNVTGVLHMGH. A 'KMSKS' region motif is present at residues 532 to 536; that stretch reads KMSKS. An ATP-binding site is contributed by lysine 535. Coiled-coil stretches lie at residues 805 to 826 and 853 to 875; these read GNMI…HKEG and RKKQ…SLKN.

It belongs to the class-I aminoacyl-tRNA synthetase family. ValS type 1 subfamily. In terms of assembly, monomer.

The protein resides in the cytoplasm. It catalyses the reaction tRNA(Val) + L-valine + ATP = L-valyl-tRNA(Val) + AMP + diphosphate. Catalyzes the attachment of valine to tRNA(Val). As ValRS can inadvertently accommodate and process structurally similar amino acids such as threonine, to avoid such errors, it has a 'posttransfer' editing activity that hydrolyzes mischarged Thr-tRNA(Val) in a tRNA-dependent manner. This chain is Valine--tRNA ligase, found in Bacteroides fragilis (strain ATCC 25285 / DSM 2151 / CCUG 4856 / JCM 11019 / LMG 10263 / NCTC 9343 / Onslow / VPI 2553 / EN-2).